Here is a 305-residue protein sequence, read N- to C-terminus: MGAQLRVYKRRIRSVTATKKITKAMEMIAASRVVKAQRKVAASTPYARELTRAVTAVGTGSNTKHPLTTEADSPSRAAVLLLTSDRGLAGAFNSNSIKAAEQLTERLEREGRQVDTYIVGRRGLAHYNFRERKVVESFAGFTDEPTYADAKKVAAPLIEAIEKDTAEGGVDELHIVYTEFVSMMTQTAVDSRLLPLSLDEVAEESGAKDEILPLYDFEPSAEDVLDALLPRYVESRIYNALLQSAASKHAATRRAMKSATDNAGELINTLSRLANAARQAEITQEISEIVGGASALADANAGSDN.

This sequence belongs to the ATPase gamma chain family. F-type ATPases have 2 components, CF(1) - the catalytic core - and CF(0) - the membrane proton channel. CF(1) has five subunits: alpha(3), beta(3), gamma(1), delta(1), epsilon(1). CF(0) has three main subunits: a, b and c.

Its subcellular location is the cell membrane. In terms of biological role, produces ATP from ADP in the presence of a proton gradient across the membrane. The gamma chain is believed to be important in regulating ATPase activity and the flow of protons through the CF(0) complex. The protein is ATP synthase gamma chain of Streptomyces coelicolor (strain ATCC BAA-471 / A3(2) / M145).